Here is a 191-residue protein sequence, read N- to C-terminus: Glutathione-independent glyoxalase DJ-1 (191 aa).

Active-site residues include Glu16, Cys111, and His130.

Belongs to the peptidase C56 family.

It localises to the cytoplasm. The protein localises to the nucleus. It carries out the reaction methylglyoxal + H2O = (R)-lactate + H(+). In terms of biological role, catalyzes the conversion of methylglyoxal (MG) to D-lactate in a single glutathione (GSH)-independent step. May play a role in detoxifying endogenously produced glyoxals. Involved in protection against reactive oxygen species (ROS). This chain is Glutathione-independent glyoxalase DJ-1, found in Schizosaccharomyces pombe (strain 972 / ATCC 24843) (Fission yeast).